Here is a 256-residue protein sequence, read N- to C-terminus: 3-hydroxy-5-phosphonooxypentane-2,4-dione thiolase (256 aa).

Lys-168 serves as the catalytic Schiff-base intermediate with substrate.

Belongs to the DeoC/FbaB aldolase family. In terms of assembly, homodecamer.

Its subcellular location is the cytoplasm. It carries out the reaction dihydroxyacetone phosphate + acetyl-CoA = 3-hydroxy-2,4-dioxopentyl phosphate + CoA. In terms of biological role, involved in the degradation of phospho-AI-2, thereby terminating induction of the lsr operon and closing the AI-2 signaling cycle. Catalyzes the transfer of an acetyl moiety from 3-hydroxy-5-phosphonooxypentane-2,4-dione to CoA to form glycerone phosphate and acetyl-CoA. The chain is 3-hydroxy-5-phosphonooxypentane-2,4-dione thiolase (lsrF) from Shigella flexneri.